A 513-amino-acid chain; its full sequence is MSDAHDTIKSLTGDASNSRRLIVVSNRLPITIKRKDNGTYDFSMSSGGLVSALSGLKKLMTFQWLGWCGQEIPEDEKPMIIQRLQDECSAIPVFLDDETADRHYNGFSNSILWPLFHYHPGEINFDEENWEAYRAANYAFAEAIVKNLQDGDLIWVQDYHLMVLPQMLRELIGDKFKDIKIGFFLHTPFPSSEIYRVLPVRNEILEGVLNCDLVGFHTYDYARHFLSACSRILNLSTLPNGVEYNGQMVSVGTFPIGIDPEKFSDALKSDVVKDRIASIERRLQGVKVIVGVDRLDYIKGVPQKFHAFEVFLEQYPEWVGKVVLVQVAVPSRQDVEEYQNLRAVVNELVGRINGRFGTVEYTPIHFLHKSVRFEELVALYNVSDVCLITSTRDGMNLVSYEYICTQQERHGALILSEFAGAAQSLNGSIVINPWNTEELANSIHDALTMPEKQREANENKLFRYVNKYTSQFWGQSFVGELQRIQHYSHPHPRRTNPILRTKSAQVLSMNSSS.

Tyrosine 40 is subject to Phosphotyrosine. D-glucose 6-phosphate contacts are provided by tyrosine 104 and aspartate 158. 2 residues coordinate UDP: arginine 294 and lysine 299. Positions 294 and 299 each coordinate UDP-alpha-D-glucose. Arginine 332 lines the D-glucose 6-phosphate pocket. 393–401 (DGMNLVSYE) contacts UDP-alpha-D-glucose. Position 397–401 (397–401 (LVSYE)) interacts with UDP. Serine 503 bears the Phosphoserine mark.

It belongs to the glycosyltransferase 20 family. In terms of assembly, homomer. Component of the trehalose synthase complex that contains at least tps1, ntp1 and tpp1. Interacts with tpp1. Interacts with ntp1; the interaction is independent of stress conditions.

The protein resides in the cytoplasm. It is found in the nucleus. The enzyme catalyses D-glucose 6-phosphate + UDP-alpha-D-glucose = alpha,alpha-trehalose 6-phosphate + UDP + H(+). It participates in carbohydrate biosynthesis. Functionally, synthase catalytic subunit of the trehalose synthase complex that catalyzes the production of trehalose from glucose-6-phosphate and UDP-alpha-D-glucose in a two step process. The disaccharide trehalose serves as a storage carbohydrate that is mobilized during nutrient stress and spore germination. Together with ntp1, regulates the level of trehalose as a protectant for cell integrity during thermal and osmotic stress. This is Alpha,alpha-trehalose-phosphate synthase [UDP-forming] from Schizosaccharomyces pombe (strain 972 / ATCC 24843) (Fission yeast).